The chain runs to 329 residues: NADH-quinone oxidoreductase subunit H (329 aa).

A run of 9 helical transmembrane segments spans residues 9–29 (LIKI…ATYI), 42–62 (GPCY…IKLF), 75–95 (FIFT…MAPI), 117–137 (IGFL…ILAG), 154–174 (IQLL…LMVV), 188–208 (GGFL…FLIA), 238–258 (LKWG…SFVI), 269–291 (WGFI…LSMW), and 309–329 (WKIM…IILI).

Belongs to the complex I subunit 1 family. As to quaternary structure, NDH-1 is composed of 14 different subunits. Subunits NuoA, H, J, K, L, M, N constitute the membrane sector of the complex.

The protein resides in the cell inner membrane. The catalysed reaction is a quinone + NADH + 5 H(+)(in) = a quinol + NAD(+) + 4 H(+)(out). In terms of biological role, NDH-1 shuttles electrons from NADH, via FMN and iron-sulfur (Fe-S) centers, to quinones in the respiratory chain. The immediate electron acceptor for the enzyme in this species is believed to be ubiquinone. Couples the redox reaction to proton translocation (for every two electrons transferred, four hydrogen ions are translocated across the cytoplasmic membrane), and thus conserves the redox energy in a proton gradient. This subunit may bind ubiquinone. In Helicobacter pylori (strain Shi470), this protein is NADH-quinone oxidoreductase subunit H.